The chain runs to 315 residues: Porphobilinogen deaminase (315 aa).

Cysteine 241 is modified (S-(dipyrrolylmethanemethyl)cysteine).

It belongs to the HMBS family. Monomer. Dipyrromethane is required as a cofactor.

The catalysed reaction is 4 porphobilinogen + H2O = hydroxymethylbilane + 4 NH4(+). It functions in the pathway porphyrin-containing compound metabolism; protoporphyrin-IX biosynthesis; coproporphyrinogen-III from 5-aminolevulinate: step 2/4. Tetrapolymerization of the monopyrrole PBG into the hydroxymethylbilane pre-uroporphyrinogen in several discrete steps. This chain is Porphobilinogen deaminase, found in Nitratidesulfovibrio vulgaris (strain DP4) (Desulfovibrio vulgaris).